A 407-amino-acid polypeptide reads, in one-letter code: MKMKNFLSKSLLVLLIGLIGVKSADLSDCFSSRSTWYEAIQHGNCGYEQLTGKLGPGNLMIAAAATALYNGSFACGECYEIYGPGGTGKVMIVDQCPDPGWCDTPFPHLDLSPTAFNTTIGSTVGVAMTTVKKVSCDVTGNIKAYMKDAATTNTWFEFMVFNHRVGIASISVEDSKGTITSLPRRLYNYWTYNGNAASFPVIAHVYSIYGDQVDIYLTSSAGAQLYEGVGQFADPATTFADDCTAPFPVDTDGYIYDNGLVKPLNYNHPNLGWSDWSNGVTVNWADSSTPGADSTSKVVASGTLAYNTGIQIGTDLPVEWEGRFTALEFYIKADKDFTGLVVEYNGASKSQTPSLTTTWTKYTYDLTKDLGAPASLGKPAALKFRNNGSGSVKVYLDKIRLTPVASS.

Positions methionine 1 to serine 23 are cleaved as a signal peptide. The Expansin-like EG45 domain maps to histidine 42–asparagine 141. 2 cysteine pairs are disulfide-bonded: cysteine 45–cysteine 75 and cysteine 78–cysteine 136. N-linked (GlcNAc...) asparagine glycosylation is found at asparagine 70, asparagine 117, and asparagine 387.

It belongs to the expansin family. Expansin A subfamily.

It localises to the secreted. Functionally, unlikely to encode with a protein with expansin activity. This Dictyostelium discoideum (Social amoeba) protein is Expansin-like protein 2 (expl2).